Consider the following 530-residue polypeptide: Glucocorticoid modulatory element-binding protein 2 (530 aa).

An SAND domain is found at 81-163; it reads EEGENLEAEI…RKIMDSGELD (83 aa). Cysteine 110 contributes to the Zn(2+) binding site. Lysine 136, lysine 140, lysine 143, and arginine 154 together coordinate DNA. A Glycyl lysine isopeptide (Lys-Gly) (interchain with G-Cter in SUMO1); alternate cross-link involves residue lysine 155. Lysine 155 is covalently cross-linked (Glycyl lysine isopeptide (Lys-Gly) (interchain with G-Cter in SUMO2); alternate). Histidine 167, cysteine 171, and cysteine 175 together coordinate Zn(2+). Residues 304 to 348 adopt a coiled-coil conformation; that stretch reads QMDRSREQYARDLAALEQQCDEHRRRAKELKHKSQHLSNVLMTLT. Serine 373 carries the phosphoserine modification.

Homodimer, and heterodimer of GMEB1 and GMEB2. GMEB1 and GMEB2 form the parvovirus initiator complex (PIF). Interacts with the glucocorticoid receptor (NR3C1). May interact with CREB-binding protein (CBP). As to expression, expressed in peripheral blood lymphocytes and fetal liver. Expressed preferentially in reproductive and/or developmentally important cells, such as testis, placenta, bone marrow and fetal tissues.

The protein localises to the nucleus. The protein resides in the cytoplasm. Trans-acting factor that binds to glucocorticoid modulatory elements (GME) present in the TAT (tyrosine aminotransferase) promoter and increases sensitivity to low concentrations of glucocorticoids. Also binds to the transferrin receptor promoter. Essential auxiliary factor for the replication of parvoviruses. The chain is Glucocorticoid modulatory element-binding protein 2 (GMEB2) from Homo sapiens (Human).